The sequence spans 419 residues: Maltoporin 2 (419 aa).

The N-terminal stretch at 1–23 is a signal peptide; the sequence is MKTSLRTLSVALAAALVSPSVLA.

This sequence belongs to the porin LamB (TC 1.B.3) family. In terms of assembly, homotrimer formed of three 18-stranded antiparallel beta-barrels, containing three independent channels.

Its subcellular location is the cell outer membrane. The catalysed reaction is beta-maltose(in) = beta-maltose(out). In terms of biological role, involved in the transport of maltose and maltodextrins. The chain is Maltoporin 2 from Yersinia pestis bv. Antiqua (strain Antiqua).